We begin with the raw amino-acid sequence, 325 residues long: Deoxyhypusine hydroxylase (325 aa).

Serine 2 bears the N-acetylserine mark. HEAT-like PBS-type repeat units follow at residues 77–103 (LKHE…VMLD) and 110–136 (VRHE…AAKE). 4 residues coordinate Fe cation: histidine 79, glutamate 80, histidine 112, and glutamate 113. Serine 126 carries the post-translational modification Phosphoserine. A Phosphothreonine modification is found at threonine 187. 3 HEAT-like PBS-type repeats span residues 202–231 (LFQR…FSAE), 235–261 (FKHE…VLGR), and 268–294 (VRHE…YLND). 4 residues coordinate Fe cation: histidine 237, glutamate 238, histidine 270, and glutamate 271. Serine 281 carries the post-translational modification Phosphoserine.

The protein belongs to the deoxyhypusine hydroxylase family. The cofactor is Fe(2+).

Its subcellular location is the cytoplasm. It localises to the nucleus. The catalysed reaction is [eIF5A protein]-deoxyhypusine + AH2 + O2 = [eIF5A protein]-hypusine + A + H2O. The protein operates within protein modification; eIF5A hypusination. Catalyzes the hydroxylation of the N(6)-(4-aminobutyl)-L-lysine intermediate to form hypusine, an essential post-translational modification only found in mature eIF-5A factor. The polypeptide is Deoxyhypusine hydroxylase (Saccharomyces cerevisiae (strain ATCC 204508 / S288c) (Baker's yeast)).